The sequence spans 884 residues: Protein translocase subunit SecA (884 aa).

ATP contacts are provided by residues Gln83, 101 to 105 (GEGKT), and Asp491.

This sequence belongs to the SecA family.

It is found in the plastid. The protein localises to the chloroplast stroma. The protein resides in the chloroplast thylakoid membrane. The enzyme catalyses ATP + H2O + cellular proteinSide 1 = ADP + phosphate + cellular proteinSide 2.. In terms of biological role, has a central role in coupling the hydrolysis of ATP to the transfer of proteins across the thylakoid membrane. The chain is Protein translocase subunit SecA from Pyropia yezoensis (Susabi-nori).